The primary structure comprises 376 residues: Succinyl-diaminopimelate desuccinylase (376 aa).

His67 serves as a coordination point for Zn(2+). Asp69 is a catalytic residue. Asp100 contacts Zn(2+). The Proton acceptor role is filled by Glu134. Residues Glu135, Glu163, and His349 each contribute to the Zn(2+) site.

It belongs to the peptidase M20A family. DapE subfamily. As to quaternary structure, homodimer. Zn(2+) serves as cofactor. Requires Co(2+) as cofactor.

The catalysed reaction is N-succinyl-(2S,6S)-2,6-diaminopimelate + H2O = (2S,6S)-2,6-diaminopimelate + succinate. Its pathway is amino-acid biosynthesis; L-lysine biosynthesis via DAP pathway; LL-2,6-diaminopimelate from (S)-tetrahydrodipicolinate (succinylase route): step 3/3. In terms of biological role, catalyzes the hydrolysis of N-succinyl-L,L-diaminopimelic acid (SDAP), forming succinate and LL-2,6-diaminopimelate (DAP), an intermediate involved in the bacterial biosynthesis of lysine and meso-diaminopimelic acid, an essential component of bacterial cell walls. In Proteus mirabilis (strain HI4320), this protein is Succinyl-diaminopimelate desuccinylase.